A 586-amino-acid chain; its full sequence is A-type ATP synthase subunit A (586 aa).

232–239 serves as a coordination point for ATP; sequence GPFGSGKT.

This sequence belongs to the ATPase alpha/beta chains family. In terms of assembly, has multiple subunits with at least A(3), B(3), C, D, E, F, H, I and proteolipid K(x).

The protein resides in the cell membrane. It catalyses the reaction ATP + H2O + 4 H(+)(in) = ADP + phosphate + 5 H(+)(out). In terms of biological role, component of the A-type ATP synthase that produces ATP from ADP in the presence of a proton gradient across the membrane. The A chain is the catalytic subunit. The polypeptide is A-type ATP synthase subunit A (Methanococcus maripaludis (strain C7 / ATCC BAA-1331)).